A 289-amino-acid chain; its full sequence is 7-methylguanosine phosphate-specific 5'-nucleotidase (289 aa).

The Nucleophile role is filled by aspartate 38. Positions 38 and 40 each coordinate Mg(2+). The active-site Proton donor is the aspartate 40. Position 85 (glutamate 85) interacts with CMP. Glutamate 85 lines the N(7)-methyl-GMP pocket. Residues 153–154 (SA) and lysine 202 contribute to the substrate site. Aspartate 227 serves as a coordination point for Mg(2+).

The protein belongs to the pyrimidine 5'-nucleotidase family. As to quaternary structure, monomer.

Its subcellular location is the cytoplasm. It catalyses the reaction N(7)-methyl-GMP + H2O = N(7)-methylguanosine + phosphate. It carries out the reaction CMP + H2O = cytidine + phosphate. The catalysed reaction is a ribonucleoside 5'-phosphate + H2O = a ribonucleoside + phosphate. Functionally, specifically hydrolyzes 7-methylguanosine monophosphate (m(7)GMP) to 7-methylguanosine and inorganic phosphate. The specific activity for m(7)GMP may protect cells against undesired salvage of m(7)GMP and its incorporation into nucleic acids. Also has weak activity for CMP. UMP and purine nucleotides are poor substrates. The chain is 7-methylguanosine phosphate-specific 5'-nucleotidase (NT5C3B) from Gallus gallus (Chicken).